The following is a 329-amino-acid chain: Glyceraldehyde-3-phosphate dehydrogenase 1 (329 aa).

Residues Arg-11–Ile-12, Asp-33, and Lys-78 contribute to the NAD(+) site. Residues Ser-148–Thr-150, Thr-179, Thr-208–Gly-209, and Arg-231 each bind D-glyceraldehyde 3-phosphate. The active-site Nucleophile is Cys-149. Asn-313 is a binding site for NAD(+).

The protein belongs to the glyceraldehyde-3-phosphate dehydrogenase family. As to quaternary structure, homotetramer.

The protein localises to the cytoplasm. The catalysed reaction is D-glyceraldehyde 3-phosphate + phosphate + NAD(+) = (2R)-3-phospho-glyceroyl phosphate + NADH + H(+). Its pathway is carbohydrate degradation; glycolysis; pyruvate from D-glyceraldehyde 3-phosphate: step 1/5. The chain is Glyceraldehyde-3-phosphate dehydrogenase 1 (GAP1) from Kluyveromyces lactis (strain ATCC 8585 / CBS 2359 / DSM 70799 / NBRC 1267 / NRRL Y-1140 / WM37) (Yeast).